The primary structure comprises 160 residues: 3-hydroxyacyl-[acyl-carrier-protein] dehydratase FabZ (160 aa).

His63 is a catalytic residue.

The protein belongs to the thioester dehydratase family. FabZ subfamily.

It localises to the cytoplasm. The enzyme catalyses a (3R)-hydroxyacyl-[ACP] = a (2E)-enoyl-[ACP] + H2O. Involved in unsaturated fatty acids biosynthesis. Catalyzes the dehydration of short chain beta-hydroxyacyl-ACPs and long chain saturated and unsaturated beta-hydroxyacyl-ACPs. The chain is 3-hydroxyacyl-[acyl-carrier-protein] dehydratase FabZ from Xylella fastidiosa (strain M23).